The chain runs to 467 residues: UDP-N-acetylmuramate--L-alanine ligase (467 aa).

Position 114 to 120 (114 to 120 (GTHGKTT)) interacts with ATP.

The protein belongs to the MurCDEF family.

The protein resides in the cytoplasm. The enzyme catalyses UDP-N-acetyl-alpha-D-muramate + L-alanine + ATP = UDP-N-acetyl-alpha-D-muramoyl-L-alanine + ADP + phosphate + H(+). It participates in cell wall biogenesis; peptidoglycan biosynthesis. In terms of biological role, cell wall formation. The protein is UDP-N-acetylmuramate--L-alanine ligase of Rhodopseudomonas palustris (strain TIE-1).